Reading from the N-terminus, the 339-residue chain is Ketol-acid reductoisomerase (NADP(+)) (339 aa).

The KARI N-terminal Rossmann domain maps to methionine 1 to threonine 182. NADP(+)-binding positions include tyrosine 24–glutamine 27, arginine 48, serine 51, threonine 53, and aspartate 83–glutamine 86. The active site involves histidine 108. Residue glycine 134 participates in NADP(+) binding. The region spanning threonine 183 to isoleucine 328 is the KARI C-terminal knotted domain. Residues aspartate 191, glutamate 195, glutamate 227, and glutamate 231 each contribute to the Mg(2+) site. Position 252 (serine 252) interacts with substrate.

It belongs to the ketol-acid reductoisomerase family. Requires Mg(2+) as cofactor.

It carries out the reaction (2R)-2,3-dihydroxy-3-methylbutanoate + NADP(+) = (2S)-2-acetolactate + NADPH + H(+). The catalysed reaction is (2R,3R)-2,3-dihydroxy-3-methylpentanoate + NADP(+) = (S)-2-ethyl-2-hydroxy-3-oxobutanoate + NADPH + H(+). It functions in the pathway amino-acid biosynthesis; L-isoleucine biosynthesis; L-isoleucine from 2-oxobutanoate: step 2/4. Its pathway is amino-acid biosynthesis; L-valine biosynthesis; L-valine from pyruvate: step 2/4. Functionally, involved in the biosynthesis of branched-chain amino acids (BCAA). Catalyzes an alkyl-migration followed by a ketol-acid reduction of (S)-2-acetolactate (S2AL) to yield (R)-2,3-dihydroxy-isovalerate. In the isomerase reaction, S2AL is rearranged via a Mg-dependent methyl migration to produce 3-hydroxy-3-methyl-2-ketobutyrate (HMKB). In the reductase reaction, this 2-ketoacid undergoes a metal-dependent reduction by NADPH to yield (R)-2,3-dihydroxy-isovalerate. The sequence is that of Ketol-acid reductoisomerase (NADP(+)) from Rhizorhabdus wittichii (strain DSM 6014 / CCUG 31198 / JCM 15750 / NBRC 105917 / EY 4224 / RW1) (Sphingomonas wittichii).